Consider the following 383-residue polypeptide: Centractin (383 aa).

The segment at Pro-227–Pro-246 is disordered.

Belongs to the actin family. ARP1 subfamily.

It localises to the cytoplasm. Its subcellular location is the cytoskeleton. The protein localises to the microtubule organizing center. It is found in the centrosome. In terms of biological role, component of a multi-subunit complex, PPK2 (poly P kinase complex 2) involved in microtubule based vesicle motility. It is associated with the centrosome. PPK2 complex can synthesize a poly chain of hundreds of phosphate residues linked by ATP-like bonds. The polypeptide is Centractin (arpA) (Dictyostelium discoideum (Social amoeba)).